The chain runs to 423 residues: Adenylosuccinate synthetase (423 aa).

GTP-binding positions include 11 to 17 (GDEGKGK) and 39 to 41 (GHT). D12 acts as the Proton acceptor in catalysis. Mg(2+) is bound by residues D12 and G39. Residues 12-15 (DEGK), 37-40 (NAGH), T129, R143, N219, T234, and R298 each bind IMP. Residue H40 is the Proton donor of the active site. Residue 294 to 300 (VTTGRRR) participates in substrate binding. Residues R300, 326–328 (KLD), and 411–413 (GTG) each bind GTP.

The protein belongs to the adenylosuccinate synthetase family. Homodimer. Mg(2+) is required as a cofactor.

The protein localises to the cytoplasm. The catalysed reaction is IMP + L-aspartate + GTP = N(6)-(1,2-dicarboxyethyl)-AMP + GDP + phosphate + 2 H(+). The protein operates within purine metabolism; AMP biosynthesis via de novo pathway; AMP from IMP: step 1/2. Functionally, plays an important role in the de novo pathway and in the salvage pathway of purine nucleotide biosynthesis. Catalyzes the first committed step in the biosynthesis of AMP from IMP. This is Adenylosuccinate synthetase from Penicillium rubens (strain ATCC 28089 / DSM 1075 / NRRL 1951 / Wisconsin 54-1255) (Penicillium chrysogenum).